The chain runs to 1409 residues: MAP kinase-activating death domain protein (1409 aa).

Residues Arg26–Gln230 form the uDENN domain. The 140-residue stretch at Arg251 to Lys390 folds into the cDENN domain. Residues Ala392–Thr496 enclose the dDENN domain. Disordered regions lie at residues Ser654–Leu701, Gln761–Asn784, Ser902–Thr1008, and Pro1015–Ala1034. Polar residues-rich tracts occupy residues Ser680–Ser691 and Gln761–Pro772. Low complexity-rich tracts occupy residues Thr773 to Asn784 and Ser902 to Ser913. The span at His915–Pro925 shows a compositional bias: basic and acidic residues. The span at Leu941 to Ser961 shows a compositional bias: polar residues. Over residues Ala963–Arg1003 the composition is skewed to pro residues. Residues Pro1020 to Ser1031 show a composition bias toward low complexity. The region spanning Gly1109–Lys1184 is the Death domain.

It belongs to the MADD family. Interacts with cab-1. Expressed in nearly all neurons.

Its subcellular location is the cell membrane. It is found in the cytoplasm. Functionally, guanyl-nucleotide exchange factor that regulates small GTPases. Converts GDP-bound inactive form of rab-3 and cab-1 to the GTP-bound active forms. Regulator of presynaptic activity that interacts with rab-3 to regulate synaptic vesicle release. Is also a regulator of the cab-1 synaptic transmission pathway. Probably by converting rab-3 to its GTP-bound active form, plays a role in the recruitment of endophilin unc-57 to synaptic vesicles. Probably by activating rab-3 and thus regulating the trafficking of dense-core vesicles, plays a role in AVG neuron-mediated formation of the right axon tract of the ventral nerve cord. Regulates anterior body muscle contractions (aBOC) and the expulsion steps during the defecation motor program (DMP). Probably by regulating DMP, required for fatty acid uptake by intestinal cells. In Caenorhabditis elegans, this protein is MAP kinase-activating death domain protein (aex-3).